Consider the following 233-residue polypeptide: Small ribosomal subunit protein uS3 (233 aa).

The KH type-2 domain maps to 39–107 (VRQFLTKELS…PAQINIAEVR (69 aa)).

Belongs to the universal ribosomal protein uS3 family. Part of the 30S ribosomal subunit. Forms a tight complex with proteins S10 and S14.

Binds the lower part of the 30S subunit head. Binds mRNA in the 70S ribosome, positioning it for translation. This Vibrio vulnificus (strain CMCP6) protein is Small ribosomal subunit protein uS3.